The sequence spans 129 residues: Glycine cleavage system H protein (129 aa).

The Lipoyl-binding domain occupies 24 to 106 (IATIGITEFA…YGEGWFLKVR (83 aa)). K65 is subject to N6-lipoyllysine.

The protein belongs to the GcvH family. As to quaternary structure, the glycine cleavage system is composed of four proteins: P, T, L and H. (R)-lipoate serves as cofactor.

Functionally, the glycine cleavage system catalyzes the degradation of glycine. The H protein shuttles the methylamine group of glycine from the P protein to the T protein. The protein is Glycine cleavage system H protein of Nostoc punctiforme (strain ATCC 29133 / PCC 73102).